A 298-amino-acid polypeptide reads, in one-letter code: Protease HtpX homolog (298 aa).

2 helical membrane passes run 14-34 (ILVM…IGYL) and 39-59 (VIGG…VIIG). Position 144 (histidine 144) interacts with Zn(2+). The active site involves glutamate 145. Histidine 148 contributes to the Zn(2+) binding site. 2 helical membrane-spanning segments follow: residues 159 to 179 (IALA…NFWW) and 195 to 215 (IFAI…ATIA). Glutamate 224 provides a ligand contact to Zn(2+).

The protein belongs to the peptidase M48B family. Zn(2+) is required as a cofactor.

The protein localises to the cell membrane. This is Protease HtpX homolog from Limosilactobacillus reuteri (strain DSM 20016) (Lactobacillus reuteri).